The following is a 175-amino-acid chain: Ribosome maturation factor RimM (175 aa).

The PRC barrel domain occupies 95 to 175 (EEGDYYWHDL…TITVDWDAGF (81 aa)).

This sequence belongs to the RimM family. As to quaternary structure, binds ribosomal protein uS19.

The protein localises to the cytoplasm. In terms of biological role, an accessory protein needed during the final step in the assembly of 30S ribosomal subunit, possibly for assembly of the head region. Essential for efficient processing of 16S rRNA. May be needed both before and after RbfA during the maturation of 16S rRNA. It has affinity for free ribosomal 30S subunits but not for 70S ribosomes. The sequence is that of Ribosome maturation factor RimM from Glaesserella parasuis serovar 5 (strain SH0165) (Haemophilus parasuis).